We begin with the raw amino-acid sequence, 159 residues long: 16 kDa outer membrane lipoprotein (159 aa).

Residues 1–21 (MNKKIFTLFLVVAASAIFAVS) form the signal peptide. Residue Cys-22 is the site of N-palmitoyl cysteine attachment. A lipid anchor (S-diacylglycerol cysteine) is attached at Cys-22.

It is found in the cell outer membrane. The polypeptide is 16 kDa outer membrane lipoprotein (smpA) (Brachyspira hyodysenteriae (Treponema hyodysenteriae)).